We begin with the raw amino-acid sequence, 476 residues long: Retinoic acid receptor gamma (476 aa).

The tract at residues 1 to 109 (MANSSKERLC…PPPPPRVYKP (109 aa)) is modulating. The segment covering 81-96 (STVETQSTSSEEMVPS) has biased composition (low complexity). A disordered region spans residues 81-102 (STVETQSTSSEEMVPSSPSPPP). NR C4-type zinc fingers lie at residues 110–130 (CFVC…CEGC) and 146–170 (CHRD…LQKC). A DNA-binding region (nuclear receptor) is located at residues 110 to 175 (CFVCNDKSSG…RLQKCFQVGM (66 aa)). The interval 176–205 (SKEAVRNDRNKKKKEIKEEVVLPDSYEMPP) is hinge. The Nuclear localization signal signature appears at 184-189 (RNKKKK). The region spanning 206–440 (EMEELIQKVS…PLIREMLENP (235 aa)) is the NR LBD domain. Positions 435–476 (EMLENPEAFEDGAATPKPSERSSSESSNGSPTGEDSSGSKTP) are disordered. Polar residues predominate over residues 462 to 476 (NGSPTGEDSSGSKTP).

It belongs to the nuclear hormone receptor family. NR1 subfamily. Heterodimer; with a rxr molecule. Binds DNA preferentially as a rar/rxr heterodimer. In terms of tissue distribution, expressed in embryos, tadpoles and various adult tissue such as kidney, testis, brain, liver, skeletal muscle and spleen.

It is found in the nucleus. Its function is as follows. Receptor for retinoic acid. Retinoic acid receptors bind as heterodimers to their target response elements in response to their ligands, all-trans or 9-cis retinoic acid, and regulate gene expression in various biological processes. The rar/rxr heterodimers bind to the retinoic acid response elements (RARE) composed of tandem 5'-AGGTCA-3' sites known as DR1-DR5. This is Retinoic acid receptor gamma (rarg) from Xenopus laevis (African clawed frog).